The chain runs to 491 residues: Mitochondrial distribution and morphology protein 12 (491 aa).

In terms of domain architecture, SMP-LTD spans 1 to 491; that stretch reads MSIDLNWEAA…VFPSYWTFLV (491 aa). Over residues 72 to 82 the composition is skewed to acidic residues; that stretch reads ESDSSEDEDGE. Disordered stretches follow at residues 72–123, 201–313, and 389–434; these read ESDS…NHHD, GWPD…MRER, and GDED…QPRR. Composition is skewed to basic and acidic residues over residues 83 to 123 and 213 to 229; these read GHDA…NHHD and MTDH…HNKN. Over residues 230-249 the composition is skewed to polar residues; the sequence is ETGSPSRPSTAHTNPTQLSH. Low complexity predominate over residues 252 to 262; that stretch reads SAASSSNNTSN. Polar residues predominate over residues 270 to 279; it reads DHTSSTTATT. The segment covering 400–421 has biased composition (low complexity); it reads STANTTTAASGSSTDNNNNNNE.

This sequence belongs to the MDM12 family. In terms of assembly, component of the ER-mitochondria encounter structure (ERMES) or MDM complex, composed of mmm1, mdm10, mdm12 and mdm34. A mmm1 homodimer associates with one molecule of mdm12 on each side in a pairwise head-to-tail manner, and the SMP-LTD domains of mmm1 and mdm12 generate a continuous hydrophobic tunnel for phospholipid trafficking.

It localises to the mitochondrion outer membrane. Its subcellular location is the endoplasmic reticulum membrane. Functionally, component of the ERMES/MDM complex, which serves as a molecular tether to connect the endoplasmic reticulum (ER) and mitochondria. Components of this complex are involved in the control of mitochondrial shape and protein biogenesis, and function in nonvesicular lipid trafficking between the ER and mitochondria. Mdm12 is required for the interaction of the ER-resident membrane protein mmm1 and the outer mitochondrial membrane-resident beta-barrel protein mdm10. The mdm12-mmm1 subcomplex functions in the major beta-barrel assembly pathway that is responsible for biogenesis of all mitochondrial outer membrane beta-barrel proteins, and acts in a late step after the SAM complex. The mdm10-mdm12-mmm1 subcomplex further acts in the TOM40-specific pathway after the action of the mdm12-mmm1 complex. Essential for establishing and maintaining the structure of mitochondria and maintenance of mtDNA nucleoids. The polypeptide is Mitochondrial distribution and morphology protein 12 (Talaromyces stipitatus (strain ATCC 10500 / CBS 375.48 / QM 6759 / NRRL 1006) (Penicillium stipitatum)).